A 308-amino-acid polypeptide reads, in one-letter code: Thiohydrolase (308 aa).

The protein belongs to the polyketide transferase af380 family.

The protein operates within mycotoxin biosynthesis. Its function is as follows. Thiohydrolase; part of the gene cluster that mediates the biosynthesis of brefeldin A (BFA), a protein transport inhibitor that shows antiviral, antifungal, and antitumor properties. The proposed biosynthesis of BFA involves formation of an acyclic polyketide chain that is differentially tailored throughout the backbone. The highly reducing polyketide synthase Bref-PKS is proposed to synthesize the precisely reduced octaketide precursor, which could then be directly offloaded by the thiohydrolase enzyme Bref-TH followed by a cytochrome P450 monooxygenase-mediated formation of the cyclopentane ring and macrocyclization to afford 7-deoxy BFA. Alternatively, the first ring annulation can also occur on the ACP-tethered intermediate before the thiohydrolase release and lactonization. The C7-hydroxylation by another cytochrome P450 monooxygenase is believed to be the final step in the process to obtain the final structure of BFA. In addition to the HRPKS Bref-PKS and the thiohydrolase Bref-TH, the brefeldin A biosynthesis cluster contains 4 cytochrome p450 monooxygenases (called orf3 to orf6), as well a the probable cluster-specific transcription regulator orf8. The sequence is that of Thiohydrolase from Eupenicillium brefeldianum (Penicillium brefeldianum).